The sequence spans 207 residues: Small ribosomal subunit protein uS4 (207 aa).

A compositionally biased stretch (basic and acidic residues) spans 29–38 (QDKAKFDSKP). A disordered region spans residues 29–54 (QDKAKFDSKPGQHGRTSGQRTSDYGL). The segment covering 42–52 (GRTSGQRTSDY) has biased composition (polar residues). The 64-residue stretch at 97 to 160 (SRLDNVVYRM…KKQTRIAEAL (64 aa)) folds into the S4 RNA-binding domain.

It belongs to the universal ribosomal protein uS4 family. As to quaternary structure, part of the 30S ribosomal subunit. Contacts protein S5. The interaction surface between S4 and S5 is involved in control of translational fidelity.

Its function is as follows. One of the primary rRNA binding proteins, it binds directly to 16S rRNA where it nucleates assembly of the body of the 30S subunit. With S5 and S12 plays an important role in translational accuracy. The protein is Small ribosomal subunit protein uS4 of Variovorax paradoxus (strain S110).